We begin with the raw amino-acid sequence, 215 residues long: Adenylate kinase (215 aa).

10–15 (GAGKGT) lines the ATP pocket. The interval 30–59 (STGDMLRAAIKAQTPMGKMAKEFMDAGKLV) is NMP. AMP is bound by residues T31, R36, 57–59 (KLV), 85–88 (GFPR), and Q92. Residues 122 to 159 (GRRVHPASGRTYHITYNPPKVDDKDNETGDDLIQREDD) are LID. ATP contacts are provided by residues R123 and 132–133 (TY). 2 residues coordinate AMP: R156 and R167. Q201 lines the ATP pocket.

This sequence belongs to the adenylate kinase family. Monomer.

The protein localises to the cytoplasm. It carries out the reaction AMP + ATP = 2 ADP. The protein operates within purine metabolism; AMP biosynthesis via salvage pathway; AMP from ADP: step 1/1. In terms of biological role, catalyzes the reversible transfer of the terminal phosphate group between ATP and AMP. Plays an important role in cellular energy homeostasis and in adenine nucleotide metabolism. This chain is Adenylate kinase, found in Hydrogenovibrio crunogenus (strain DSM 25203 / XCL-2) (Thiomicrospira crunogena).